The chain runs to 286 residues: ATP synthase gamma chain (286 aa).

This sequence belongs to the ATPase gamma chain family. F-type ATPases have 2 components, CF(1) - the catalytic core - and CF(0) - the membrane proton channel. CF(1) has five subunits: alpha(3), beta(3), gamma(1), delta(1), epsilon(1). CF(0) has three main subunits: a, b and c.

The protein resides in the cell inner membrane. Its function is as follows. Produces ATP from ADP in the presence of a proton gradient across the membrane. The gamma chain is believed to be important in regulating ATPase activity and the flow of protons through the CF(0) complex. In Pseudomonas syringae pv. tomato (strain ATCC BAA-871 / DC3000), this protein is ATP synthase gamma chain.